A 510-amino-acid chain; its full sequence is ATP synthase subunit alpha (510 aa).

Residue 169 to 176 (GDRQTGKT) participates in ATP binding.

This sequence belongs to the ATPase alpha/beta chains family. F-type ATPases have 2 components, CF(1) - the catalytic core - and CF(0) - the membrane proton channel. CF(1) has five subunits: alpha(3), beta(3), gamma(1), delta(1), epsilon(1). CF(0) has three main subunits: a(1), b(2) and c(9-12). The alpha and beta chains form an alternating ring which encloses part of the gamma chain. CF(1) is attached to CF(0) by a central stalk formed by the gamma and epsilon chains, while a peripheral stalk is formed by the delta and b chains.

The protein resides in the cell inner membrane. The catalysed reaction is ATP + H2O + 4 H(+)(in) = ADP + phosphate + 5 H(+)(out). Its function is as follows. Produces ATP from ADP in the presence of a proton gradient across the membrane. The alpha chain is a regulatory subunit. This Rickettsia felis (strain ATCC VR-1525 / URRWXCal2) (Rickettsia azadi) protein is ATP synthase subunit alpha.